The chain runs to 25 residues: uncharacterized protein (25 aa).

This is an uncharacterized protein from Escherichia coli (Bacteriophage T3).